The sequence spans 316 residues: MSEQFQHVSVLLHESIDGLAIKPDGIYIDGTFGRGGHSRQILSQLGENGRLYSIDRDPQAIAEAKTITDPKFTIIHGPFSGLKQYVEELELVGKIDGVLLDLGVSSPQLDDAERGFSFMKDGPLDMRMDPTSGIPVSQWLQEADVEDITWVIREFGEDKHAWRIAKGIVAYRENEENEPLTRTSQLAKLISEVAPKSFKEKKHPATRAFQAFRIYINSELDEIDTALKGALDVLAPEGRLSVISFHSLEDRMVKHFIRKESKGPQVPHGLPLTEEQIKALGSAKMKPVGKAIKPTKNEVDVNVRSRSSVLRIAERL.

S-adenosyl-L-methionine-binding positions include 35–37 (GGH), aspartate 55, phenylalanine 79, aspartate 101, and glutamine 108.

Belongs to the methyltransferase superfamily. RsmH family.

The protein localises to the cytoplasm. The catalysed reaction is cytidine(1402) in 16S rRNA + S-adenosyl-L-methionine = N(4)-methylcytidine(1402) in 16S rRNA + S-adenosyl-L-homocysteine + H(+). Specifically methylates the N4 position of cytidine in position 1402 (C1402) of 16S rRNA. The protein is Ribosomal RNA small subunit methyltransferase H of Aliivibrio fischeri (strain MJ11) (Vibrio fischeri).